A 336-amino-acid polypeptide reads, in one-letter code: Phenylalanine--tRNA ligase alpha subunit (336 aa).

Glu-263 serves as a coordination point for Mg(2+).

Belongs to the class-II aminoacyl-tRNA synthetase family. Phe-tRNA synthetase alpha subunit type 1 subfamily. As to quaternary structure, tetramer of two alpha and two beta subunits. Mg(2+) serves as cofactor.

Its subcellular location is the cytoplasm. It carries out the reaction tRNA(Phe) + L-phenylalanine + ATP = L-phenylalanyl-tRNA(Phe) + AMP + diphosphate + H(+). The protein is Phenylalanine--tRNA ligase alpha subunit of Thermosynechococcus vestitus (strain NIES-2133 / IAM M-273 / BP-1).